We begin with the raw amino-acid sequence, 570 residues long: High-affinity hexose transporter HXT7 (570 aa).

The Cytoplasmic portion of the chain corresponds to 1 to 60 (MSQDAAIAEQTPVEHLSAVDSASHSVLSTPSNKAERDEIKAYGEGEEHEPVVEIPKRPAS). Residues 61-81 (AYVTVSIMCIMIAFGGFVFGW) traverse the membrane as a helical segment. Over 82–116 (DTGTISGFINQTDFIRRFGMKHKDGTNYLSKVRTG) the chain is Extracellular. Asparagine 91 carries N-linked (GlcNAc...) asparagine glycosylation. A helical transmembrane segment spans residues 117–137 (LIVSIFNIGCAIGGIILSKLG). The Cytoplasmic portion of the chain corresponds to 138 to 143 (DMYGRK). The chain crosses the membrane as a helical span at residues 144–164 (VGLIVVVVIYIIGIIIQIASI). Residues 165–174 (NKWYQYFIGR) are Extracellular-facing. The helical transmembrane segment at 175-195 (IISGLGVGGIAVLSPMLISEV) threads the bilayer. Over 196-201 (SPKHLR) the chain is Cytoplasmic. A helical transmembrane segment spans residues 202 to 222 (GTLVSCYQLMITAGIFLGYCT). Topologically, residues 223-236 (NFGTKNYSNSVQWR) are extracellular. Residue asparagine 228 is glycosylated (N-linked (GlcNAc...) asparagine). The chain crosses the membrane as a helical span at residues 237 to 257 (VPLGLCFAWALFMIGGMTFVP). Over 258–340 (ESPRYLAEVG…IQSLQQLTGD (83 aa)) the chain is Cytoplasmic. A helical membrane pass occupies residues 341–357 (NYFFYYGTTIFKAVGLS). Topologically, residues 358-363 (DSFETS) are extracellular. A helical membrane pass occupies residues 364 to 381 (IVLGIVNFASTFVGIYVV). The Cytoplasmic portion of the chain corresponds to 382 to 388 (ERYGRRT). Residues 389–409 (CLLWGAASMTACMVVYASVGV) form a helical membrane-spanning segment. Residues 410–431 (TRLWPNGQDQPSSKGAGNCMIV) are Extracellular-facing. Residues 432 to 452 (FACFYIFCFATTWAPIPYVVV) traverse the membrane as a helical segment. Residues 453–469 (SETFPLRVKSKAMSIAT) lie on the Cytoplasmic side of the membrane. The helical transmembrane segment at 470-490 (AANWLWGFLIGFFTPFITGAI) threads the bilayer. Residue asparagine 491 is a topological domain, extracellular. A helical transmembrane segment spans residues 492–512 (FYYGYVFMGCLVFMFFYVLLV). Residues 513-570 (VPETKGLTLEEVNTMWEEGVLPWKSASWVPPSRRGANYDAEEMTHDDKPLYKRMFSTK) are Cytoplasmic-facing. Position 556 is a phosphothreonine (threonine 556). Residue lysine 560 forms a Glycyl lysine isopeptide (Lys-Gly) (interchain with G-Cter in ubiquitin) linkage.

The protein belongs to the major facilitator superfamily. Sugar transporter (TC 2.A.1.1) family.

It is found in the membrane. In terms of biological role, high-affinity glucose transporter. The chain is High-affinity hexose transporter HXT7 (HXT7) from Saccharomyces cerevisiae (strain ATCC 204508 / S288c) (Baker's yeast).